A 439-amino-acid chain; its full sequence is Taxadien-5-alpha-ol O-acetyltransferase (439 aa).

Residues His-164 and Asp-373 each act as proton acceptor in the active site.

This sequence belongs to the plant acyltransferase family.

The catalysed reaction is taxa-4(20),11-dien-5alpha-ol + acetyl-CoA = taxa-4(20),11-dien-5alpha-yl acetate + CoA. It participates in alkaloid biosynthesis; taxol biosynthesis; 10-deacetyl-2-debenzoylbaccatin III from taxa-4(20),11-dien-5alpha-ol: step 1/3. The chain is Taxadien-5-alpha-ol O-acetyltransferase from Taxus chinensis (Chinese yew).